A 694-amino-acid polypeptide reads, in one-letter code: Elongation factor G (694 aa).

The tr-type G domain occupies 10-285; it reads EKTRNIGIMA…GVVDYLPSPL (276 aa). GTP-binding positions include 19-26, 83-87, and 137-140; these read AHIDAGKT, DTPGH, and NKMD.

This sequence belongs to the TRAFAC class translation factor GTPase superfamily. Classic translation factor GTPase family. EF-G/EF-2 subfamily.

It is found in the cytoplasm. Functionally, catalyzes the GTP-dependent ribosomal translocation step during translation elongation. During this step, the ribosome changes from the pre-translocational (PRE) to the post-translocational (POST) state as the newly formed A-site-bound peptidyl-tRNA and P-site-bound deacylated tRNA move to the P and E sites, respectively. Catalyzes the coordinated movement of the two tRNA molecules, the mRNA and conformational changes in the ribosome. The protein is Elongation factor G of Lactobacillus delbrueckii subsp. bulgaricus (strain ATCC 11842 / DSM 20081 / BCRC 10696 / JCM 1002 / NBRC 13953 / NCIMB 11778 / NCTC 12712 / WDCM 00102 / Lb 14).